The following is a 369-amino-acid chain: ERCC4 domain-containing protein EP364R (369 aa).

The ERCC4 domain occupies 3-101 (FLVADHREHH…QLYFFVEGPA (99 aa)). The tract at residues 339-369 (PLHDVSDDASSDASSPTGHQTLSKEMSLNTA) is disordered. Positions 354–369 (PTGHQTLSKEMSLNTA) are enriched in polar residues.

It belongs to the asfivirus EP364R family.

Plays a role in the inhibition of type I interferon signaling pathway. Mechanistically, specifically interacts with 2',3'-cGAMP and cleaves it via its phosphodiesterase activity. In turn, prevents 2',3'-cGAMP interaction with host ER-resident STING1 leading to inhibition of downstream signaling pathway and type I interferon production. The polypeptide is ERCC4 domain-containing protein EP364R (African swine fever virus (isolate Tick/South Africa/Pretoriuskop Pr4/1996) (ASFV)).